The chain runs to 390 residues: DNA primase small subunit PriS (390 aa).

Active-site residues include D98, D100, and D296.

The protein belongs to the eukaryotic-type primase small subunit family. As to quaternary structure, heterodimer of a small subunit (PriS) and a large subunit (PriL). Mg(2+) serves as cofactor. Mn(2+) is required as a cofactor.

Its function is as follows. Catalytic subunit of DNA primase, an RNA polymerase that catalyzes the synthesis of short RNA molecules used as primers for DNA polymerase during DNA replication. The small subunit contains the primase catalytic core and has DNA synthesis activity on its own. Binding to the large subunit stabilizes and modulates the activity, increasing the rate of DNA synthesis while decreasing the length of the DNA fragments, and conferring RNA synthesis capability. The DNA polymerase activity may enable DNA primase to also catalyze primer extension after primer synthesis. May also play a role in DNA repair. The protein is DNA primase small subunit PriS of Methanococcoides burtonii (strain DSM 6242 / NBRC 107633 / OCM 468 / ACE-M).